A 61-amino-acid polypeptide reads, in one-letter code: MINIVSLVCIYINSVPYSSIFFLDKLPEAYAFLNPIVDIMPVIPLFFFLLAFVWQAAVSFR.

Residues 1-24 (MINIVSLVCIYINSVPYSSIFFLD) constitute a propeptide that is removed on maturation. The chain crosses the membrane as a helical span at residues 36–56 (IVDIMPVIPLFFFLLAFVWQA).

It belongs to the PsbK family. In terms of assembly, PSII is composed of 1 copy each of membrane proteins PsbA, PsbB, PsbC, PsbD, PsbE, PsbF, PsbH, PsbI, PsbJ, PsbK, PsbL, PsbM, PsbT, PsbX, PsbY, PsbZ, Psb30/Ycf12, at least 3 peripheral proteins of the oxygen-evolving complex and a large number of cofactors. It forms dimeric complexes.

It localises to the plastid. Its subcellular location is the chloroplast thylakoid membrane. One of the components of the core complex of photosystem II (PSII). PSII is a light-driven water:plastoquinone oxidoreductase that uses light energy to abstract electrons from H(2)O, generating O(2) and a proton gradient subsequently used for ATP formation. It consists of a core antenna complex that captures photons, and an electron transfer chain that converts photonic excitation into a charge separation. This is Photosystem II reaction center protein K from Lotus japonicus (Lotus corniculatus var. japonicus).